A 96-amino-acid polypeptide reads, in one-letter code: UPF0235 protein PC1_3453 (96 aa).

It belongs to the UPF0235 family.

The protein is UPF0235 protein PC1_3453 of Pectobacterium carotovorum subsp. carotovorum (strain PC1).